A 385-amino-acid polypeptide reads, in one-letter code: Mannitol-1-phosphate 5-dehydrogenase (385 aa).

3-14 (ALHFGAGNIGRG) is an NAD(+) binding site.

It belongs to the mannitol dehydrogenase family.

It catalyses the reaction D-mannitol 1-phosphate + NAD(+) = beta-D-fructose 6-phosphate + NADH + H(+). This Pasteurella multocida (strain Pm70) protein is Mannitol-1-phosphate 5-dehydrogenase.